The chain runs to 126 residues: MDVKHIAKQTTKTLISYLTYQAVRTVIGQLAETDPPRSLWLHQFTSQESIQDGERYLEALFREQPDLGFRILTVREHLAEMVADYLPEMLRAGIQQANLQQRCQQLERMTQVSEANVENSNLETPE.

This sequence belongs to the RbcX family. Homodimer. Interacts with the exposed C-terminal peptide of RbcL via its central cleft, contacts a second RbcL monomer via its peripheral polar surface.

Its subcellular location is the carboxysome. It is found in the cytoplasm. An RbcL-specific chaperone. Required for assembly of the RbcL8 core. The central cleft of the RbcX homodimer (RbcX2) binds the C-terminus of a RbcL monomer, stabilizing the C-terminus and probably preventing its reassociation with chaperonin GroEL-ES. At the same time the peripheral region of RbcX2 binds a second RbcL monomer, bridging the RbcL homodimers in the correct orientation. The RbcX2(2)-bound RbcL dimers then assemble into the RbcL8 core (RbcL8-(RbcX2)8). RbcS binding triggers the release of RbcX2. The protein is RuBisCO chaperone RbcX of Thermosynechococcus vestitus (strain NIES-2133 / IAM M-273 / BP-1).